The following is a 389-amino-acid chain: Carbamoyl phosphate synthase small chain (389 aa).

The segment at 1-199 (MFNPAILVLA…AGKPFNLQTT (199 aa)) is CPSase. L-glutamine contacts are provided by Ser50, Gly251, and Gly253. Positions 203 to 389 (HVVAYDFGIK…FINAVQATKA (187 aa)) constitute a Glutamine amidotransferase type-1 domain. Cys279 functions as the Nucleophile in the catalytic mechanism. Residues Leu280, Gln283, Asn321, Gly323, and Phe324 each contribute to the L-glutamine site. Residues His363 and Glu365 contribute to the active site.

Belongs to the CarA family. Composed of two chains; the small (or glutamine) chain promotes the hydrolysis of glutamine to ammonia, which is used by the large (or ammonia) chain to synthesize carbamoyl phosphate. Tetramer of heterodimers (alpha,beta)4.

The catalysed reaction is hydrogencarbonate + L-glutamine + 2 ATP + H2O = carbamoyl phosphate + L-glutamate + 2 ADP + phosphate + 2 H(+). It carries out the reaction L-glutamine + H2O = L-glutamate + NH4(+). Its pathway is amino-acid biosynthesis; L-arginine biosynthesis; carbamoyl phosphate from bicarbonate: step 1/1. It functions in the pathway pyrimidine metabolism; UMP biosynthesis via de novo pathway; (S)-dihydroorotate from bicarbonate: step 1/3. Small subunit of the glutamine-dependent carbamoyl phosphate synthetase (CPSase). CPSase catalyzes the formation of carbamoyl phosphate from the ammonia moiety of glutamine, carbonate, and phosphate donated by ATP, constituting the first step of 2 biosynthetic pathways, one leading to arginine and/or urea and the other to pyrimidine nucleotides. The small subunit (glutamine amidotransferase) binds and cleaves glutamine to supply the large subunit with the substrate ammonia. The polypeptide is Carbamoyl phosphate synthase small chain (Haemophilus ducreyi (strain 35000HP / ATCC 700724)).